We begin with the raw amino-acid sequence, 100 residues long: Small ribosomal subunit protein uS14 (100 aa).

It belongs to the universal ribosomal protein uS14 family. Part of the 30S ribosomal subunit. Contacts proteins S3 and S10.

Its function is as follows. Binds 16S rRNA, required for the assembly of 30S particles and may also be responsible for determining the conformation of the 16S rRNA at the A site. This is Small ribosomal subunit protein uS14 from Thermosynechococcus vestitus (strain NIES-2133 / IAM M-273 / BP-1).